We begin with the raw amino-acid sequence, 819 residues long: DNA topoisomerase 4 subunit A (819 aa).

Residues 30–496 (LPDIRDGLKP…QIIEIDTASL (467 aa)) form the Topo IIA-type catalytic domain. Y118 serves as the catalytic O-(5'-phospho-DNA)-tyrosine intermediate.

The protein belongs to the type II topoisomerase GyrA/ParC subunit family. ParC type 2 subfamily. In terms of assembly, heterotetramer composed of ParC and ParE.

The protein resides in the cell membrane. It catalyses the reaction ATP-dependent breakage, passage and rejoining of double-stranded DNA.. Functionally, topoisomerase IV is essential for chromosome segregation. It relaxes supercoiled DNA. Performs the decatenation events required during the replication of a circular DNA molecule. The protein is DNA topoisomerase 4 subunit A of Streptococcus pyogenes serotype M6 (strain ATCC BAA-946 / MGAS10394).